A 500-amino-acid polypeptide reads, in one-letter code: MEEFQGYFELYRSPQYDFLYPLIFREYIYALAHDRGLNRSILFDNVGYDKKSSLLIIKRLISRMYQQNHFLISVNDSNQNKFLGYNKNLYSQMISEGFAVIVEIPFSLRLVSSLEETESIKSYNLRSIHSIFPFFEDKFPHLNYASDVLIPYPIHLEILVQTLRYCVKDPSSLHLLRLFLHEYYSWNTLITPQKSIFAKSNQRLFLLLYNSYVYEYESILLFLRNQSNHLRLTSSGIFFERIRFYEKIKYPVEEVLFPATLWFFKDPFIQYVSHQGKLILASKDTPLLMNKWKYYLVNFWQCHFYVWSQPGRIHLNQLSKHSFDFLGYLSSIRPNISVVRSQLLENTYLMYNAMKKLNTLFPIIPMIGSLAKVKFCNTLGHPISKSSWADSSDSDIIDRFVRIVGNISHYYSGSSKKKSLYRIKYILRLSCVKTLARKHKSTVRTFLKRLGPKLLDEFFTEEEQIFSLLFPRASSTLKRFYRGPIWYLDILCINDTVNHE.

It belongs to the intron maturase 2 family. MatK subfamily.

The protein localises to the plastid. It is found in the chloroplast. In terms of biological role, usually encoded in the trnK tRNA gene intron. Probably assists in splicing its own and other chloroplast group II introns. The protein is Maturase K of Fragaria vesca (Woodland strawberry).